Here is a 375-residue protein sequence, read N- to C-terminus: Deoxyhypusine synthase-like protein (375 aa).

The protein belongs to the deoxyhypusine synthase family.

This Elusimicrobium minutum (strain Pei191) protein is Deoxyhypusine synthase-like protein.